Reading from the N-terminus, the 248-residue chain is ATP synthase subunit a (248 aa).

6 helical membrane-spanning segments follow: residues 25–45, 83–103, 113–133, 142–162, 192–212, and 215–235; these read IAFT…AVMM, FFPL…VGII, LIVT…YGLA, LFVP…IEVI, FIAM…LPLG, and IALT…FAIL.

It belongs to the ATPase A chain family. In terms of assembly, F-type ATPases have 2 components, CF(1) - the catalytic core - and CF(0) - the membrane proton channel. CF(1) has five subunits: alpha(3), beta(3), gamma(1), delta(1), epsilon(1). CF(0) has four main subunits: a, b, b' and c.

It is found in the cell inner membrane. Its function is as follows. Key component of the proton channel; it plays a direct role in the translocation of protons across the membrane. This chain is ATP synthase subunit a, found in Rhodopseudomonas palustris (strain HaA2).